Reading from the N-terminus, the 1346-residue chain is Proline-rich protein 36 (1346 aa).

Disordered regions lie at residues 1 to 403 (MDNK…TQLI), 426 to 512 (SVSS…QATP), 537 to 606 (PLTT…PSPL), 633 to 679 (PRQT…VSPL), 711 to 1155 (LETQ…AELA), and 1168 to 1240 (PPLA…RSPK). Low complexity predominate over residues 10–26 (AGAAARTPAARAPGLLT). A compositionally biased stretch (pro residues) spans 27–40 (PRPPGSPRPPPPVT). 2 stretches are compositionally biased toward low complexity: residues 41–55 (PAAL…AVGR) and 86–97 (SSRNPASRPPAS). A compositionally biased stretch (basic and acidic residues) spans 137 to 152 (SAEETVARGKATEAPK). Residues 165 to 177 (SGPTPGTPSPAMA) show a composition bias toward low complexity. Residues 191-203 (RPAPSARPRPPTE) are compositionally biased toward pro residues. A compositionally biased stretch (polar residues) spans 208 to 220 (SVSSASEHSTTEP). Low complexity-rich tracts occupy residues 235 to 255 (QRPA…PARS) and 293 to 312 (APAL…PSGT). Pro residues-rich tracts occupy residues 329–343 (ATLP…PPPA), 371–380 (PLAPPSPSAP), and 387–397 (PSPPATPPSQV). A compositionally biased stretch (low complexity) spans 426 to 464 (SVSSPLQSMPPTQANPALPSLPTLLSPLATPPLSAMSPL). Residues 494-506 (TPPPQASPSPSPP) show a composition bias toward pro residues. Low complexity predominate over residues 546–558 (PPLVSPSLLASPP). Positions 559–578 (LQAPPHPQAPPSMTTPPMQA) are enriched in pro residues. Positions 633 to 647 (PRQTQASLISPSRPA) are enriched in polar residues. Pro residues predominate over residues 648 to 657 (STPPDSPPLQ). The span at 658 to 679 (APLSLPASPPLQTSLSPAVSPL) shows a compositional bias: low complexity. Residues 724-733 (TPPASLTTPP) show a composition bias toward polar residues. 2 stretches are compositionally biased toward pro residues: residues 781 to 821 (ETPP…PALA) and 829 to 865 (PSPP…PPLS). A compositionally biased stretch (low complexity) spans 866-875 (PLATPSPQAP). 3 stretches are compositionally biased toward pro residues: residues 887–917 (FSPP…PSQA), 926–997 (LQVP…PPAS), and 1004–1015 (AKPPPQAPPALA). Low complexity-rich tracts occupy residues 1029-1046 (FPGQ…MSPL), 1137-1146 (DSGPEGGAAA), and 1224-1239 (GKAA…SRSP). A Phosphoserine modification is found at serine 1310.

The sequence is that of Proline-rich protein 36 from Homo sapiens (Human).